Consider the following 262-residue polypeptide: MARGLKKHLKRLNAPKHWMLDKLGGAFAPKPSSGPHKSRECLPLVLIIRNRLKYALTYREVISILMQRHIQVDGKVRTDKTYPAGFMDVVSIPKTNENFRLLYDTKGRFRLHSIKDEEAKFKLCKVRSIQFGQKGIPYLNTYDGRTIRYPDPLIKPNDTIKLDLEENKIVEFIKFDVGNVVMVTGGRNRGRVGVIKNREKHKGSFETIHIQDSTGHEFATRLGNVYTIGKGTKPWVSLPKGKGIKLTIIEEARKRLASQQAA.

The 63-residue stretch at 42-104 (LPLVLIIRNR…TNENFRLLYD (63 aa)) folds into the S4 RNA-binding domain.

It belongs to the eukaryotic ribosomal protein eS4 family.

The protein localises to the cytoplasm. The sequence is that of Small ribosomal subunit protein eS4y (RPS4B) from Arabidopsis thaliana (Mouse-ear cress).